A 138-amino-acid chain; its full sequence is Ribulose bisphosphate carboxylase small subunit (138 aa).

The protein belongs to the RuBisCO small chain family. As to quaternary structure, heterohexadecamer of 8 large and 8 small subunits.

The protein resides in the plastid. It localises to the chloroplast. Functionally, ruBisCO catalyzes two reactions: the carboxylation of D-ribulose 1,5-bisphosphate, the primary event in carbon dioxide fixation, as well as the oxidative fragmentation of the pentose substrate in the photorespiration process. Both reactions occur simultaneously and in competition at the same active site. Although the small subunit is not catalytic it is essential for maximal activity. The polypeptide is Ribulose bisphosphate carboxylase small subunit (Pyropia dentata (Red alga)).